The chain runs to 299 residues: ATP phosphoribosyltransferase (299 aa).

It belongs to the ATP phosphoribosyltransferase family. Long subfamily. Mg(2+) is required as a cofactor.

The protein resides in the cytoplasm. It catalyses the reaction 1-(5-phospho-beta-D-ribosyl)-ATP + diphosphate = 5-phospho-alpha-D-ribose 1-diphosphate + ATP. The protein operates within amino-acid biosynthesis; L-histidine biosynthesis; L-histidine from 5-phospho-alpha-D-ribose 1-diphosphate: step 1/9. Feedback inhibited by histidine. Its function is as follows. Catalyzes the condensation of ATP and 5-phosphoribose 1-diphosphate to form N'-(5'-phosphoribosyl)-ATP (PR-ATP). Has a crucial role in the pathway because the rate of histidine biosynthesis seems to be controlled primarily by regulation of HisG enzymatic activity. The sequence is that of ATP phosphoribosyltransferase from Shewanella oneidensis (strain ATCC 700550 / JCM 31522 / CIP 106686 / LMG 19005 / NCIMB 14063 / MR-1).